The following is a 343-amino-acid chain: Flavonoid 3'-O-methyltransferase FOMT (343 aa).

Positions 184, 207, 227, 228, 240, and 241 each coordinate S-adenosyl-L-homocysteine. The Proton acceptor role is filled by histidine 245. Residues glutamate 273 and glutamate 305 contribute to the active site.

Belongs to the class I-like SAM-binding methyltransferase superfamily. Cation-independent O-methyltransferase family. As to quaternary structure, homodimer.

It catalyses the reaction 3',5-dihydroxy-3,4',7-trimethoxyflavone + S-adenosyl-L-methionine = 5-hydroxy-3,7,3',4'-tetramethoxyflavone + S-adenosyl-L-homocysteine + H(+). Its pathway is flavonoid metabolism. Inhibited by nickel (NiCl(2) and NiSO(4)) and para-chloromercuribenzoate. Functionally, catalyzes the 3'- or 5'-O-methylation of partially methylated flavonols, but does not accept quercetin or caffeate as substrates for methylation. This chain is Flavonoid 3'-O-methyltransferase FOMT, found in Chrysosplenium americanum (American golden saxifrage).